Here is a 342-residue protein sequence, read N- to C-terminus: Pre-mRNA-splicing factor 18 (342 aa).

It belongs to the PRP18 family. Interacts with the spliceosome. Part of a complex containing U4/U6 snRNPs.

It is found in the nucleus speckle. Functionally, participates in the second step of pre-mRNA splicing. This Xenopus laevis (African clawed frog) protein is Pre-mRNA-splicing factor 18 (prpf18).